We begin with the raw amino-acid sequence, 401 residues long: Anhydro-N-acetylmuramic acid kinase (401 aa).

25–32 (GTSLDGLD) provides a ligand contact to ATP.

The protein belongs to the anhydro-N-acetylmuramic acid kinase family.

It catalyses the reaction 1,6-anhydro-N-acetyl-beta-muramate + ATP + H2O = N-acetyl-D-muramate 6-phosphate + ADP + H(+). Its pathway is amino-sugar metabolism; 1,6-anhydro-N-acetylmuramate degradation. It functions in the pathway cell wall biogenesis; peptidoglycan recycling. Functionally, catalyzes the specific phosphorylation of 1,6-anhydro-N-acetylmuramic acid (anhMurNAc) with the simultaneous cleavage of the 1,6-anhydro ring, generating MurNAc-6-P. Is required for the utilization of anhMurNAc either imported from the medium or derived from its own cell wall murein, and thus plays a role in cell wall recycling. The protein is Anhydro-N-acetylmuramic acid kinase of Pseudoalteromonas translucida (strain TAC 125).